Reading from the N-terminus, the 876-residue chain is Valine--tRNA ligase (876 aa).

Positions 44 to 54 (PNVTGKLHLGH) match the 'HIGH' region motif. Positions 520–524 (KMSKS) match the 'KMSKS' region motif. Residue Lys523 coordinates ATP. Residues 806–876 (EGLIDMDKEI…VKLRINQLKA (71 aa)) adopt a coiled-coil conformation.

This sequence belongs to the class-I aminoacyl-tRNA synthetase family. ValS type 1 subfamily. In terms of assembly, monomer.

Its subcellular location is the cytoplasm. The catalysed reaction is tRNA(Val) + L-valine + ATP = L-valyl-tRNA(Val) + AMP + diphosphate. Its function is as follows. Catalyzes the attachment of valine to tRNA(Val). As ValRS can inadvertently accommodate and process structurally similar amino acids such as threonine, to avoid such errors, it has a 'posttransfer' editing activity that hydrolyzes mischarged Thr-tRNA(Val) in a tRNA-dependent manner. This chain is Valine--tRNA ligase, found in Staphylococcus saprophyticus subsp. saprophyticus (strain ATCC 15305 / DSM 20229 / NCIMB 8711 / NCTC 7292 / S-41).